A 295-amino-acid polypeptide reads, in one-letter code: Pyridoxal 5'-phosphate synthase subunit PdxS (295 aa).

Aspartate 25 is a D-ribose 5-phosphate binding site. Catalysis depends on lysine 82, which acts as the Schiff-base intermediate with D-ribose 5-phosphate. Glycine 154 serves as a coordination point for D-ribose 5-phosphate. Arginine 166 lines the D-glyceraldehyde 3-phosphate pocket. D-ribose 5-phosphate contacts are provided by residues glycine 215 and 236–237 (GS).

Belongs to the PdxS/SNZ family. As to quaternary structure, in the presence of PdxT, forms a dodecamer of heterodimers.

The enzyme catalyses aldehydo-D-ribose 5-phosphate + D-glyceraldehyde 3-phosphate + L-glutamine = pyridoxal 5'-phosphate + L-glutamate + phosphate + 3 H2O + H(+). It functions in the pathway cofactor biosynthesis; pyridoxal 5'-phosphate biosynthesis. Catalyzes the formation of pyridoxal 5'-phosphate from ribose 5-phosphate (RBP), glyceraldehyde 3-phosphate (G3P) and ammonia. The ammonia is provided by the PdxT subunit. Can also use ribulose 5-phosphate and dihydroxyacetone phosphate as substrates, resulting from enzyme-catalyzed isomerization of RBP and G3P, respectively. The protein is Pyridoxal 5'-phosphate synthase subunit PdxS of Pasteurella multocida (strain Pm70).